The chain runs to 257 residues: Ribonuclease HII (257 aa).

An RNase H type-2 domain is found at 70 to 257; it reads EFIAGIDEVG…PIKSMVAGGN (188 aa). A divalent metal cation is bound by residues Asp-76, Glu-77, and Asp-168.

It belongs to the RNase HII family. Requires Mn(2+) as cofactor. Mg(2+) is required as a cofactor.

Its subcellular location is the cytoplasm. The catalysed reaction is Endonucleolytic cleavage to 5'-phosphomonoester.. Functionally, endonuclease that specifically degrades the RNA of RNA-DNA hybrids. The sequence is that of Ribonuclease HII from Streptococcus suis (strain 98HAH33).